Consider the following 160-residue polypeptide: Serine-protein kinase RsbW (160 aa).

The protein belongs to the anti-sigma-factor family.

The catalysed reaction is L-seryl-[protein] + ATP = O-phospho-L-seryl-[protein] + ADP + H(+). It carries out the reaction L-threonyl-[protein] + ATP = O-phospho-L-threonyl-[protein] + ADP + H(+). Negative regulator of sigma-B activity. Phosphorylates and inactivates its specific antagonist protein, RsbV. Upon phosphorylation of RsbV, RsbW is released and binds to sigma-B, thereby blocking its ability to form an RNA polymerase holoenzyme (E-sigma-B). This chain is Serine-protein kinase RsbW, found in Bacillus cereus (strain ZK / E33L).